The sequence spans 140 residues: N14 matrix protein (140 aa).

An N-terminal signal peptide occupies residues 1–25 (MACTLRLTIAALVLLGICHLSRPVA).

This sequence belongs to the N16 matrix protein family. In terms of assembly, heterooligomer; disulfide-linked. Pif97, Pif80, N16 and other proteins form a complex. As to expression, component of conchiolin, the organic matrix of nacre. Only expressed in the dorsal region of the mantle.

Its subcellular location is the secreted. The protein localises to the extracellular space. It is found in the extracellular matrix. In terms of biological role, may be specifically involved in the formation of the nacreous layer. This is N14 matrix protein from Pinctada maxima (Silver-lipped pearl oyster).